The sequence spans 641 residues: Putative phagocytic receptor 1a (641 aa).

An N-terminal signal peptide occupies residues 1-23 (MKINKKQIVFFILFSIFLNHVNG). Topologically, residues 24-279 (IFYLPGMIPH…ESNDNSVHWF (256 aa)) are extracellular. Residues 280–300 (SILNSLMIVFILTVMVAMIII) form a helical membrane-spanning segment. Over 301–349 (RTLKKDIRRYTSIDTSEDRDSQEETGWKMIHGDVFRPPSHPMLLSVCIG) the chain is Cytoplasmic. The chain crosses the membrane as a helical span at residues 350–370 (SGVQIFSMTLITMIFAVLGFL). Residues 371 to 374 (SPAN) are Extracellular-facing. A helical transmembrane segment spans residues 375–395 (IGGLATALIVLFVLSAMFAGY). At 396–413 (FSTRVFTIFKGRNWKKNT) the chain is on the cytoplasmic side. Residues 414–434 (IYTALSMPGIIFGIFFFVNMF) form a helical membrane-spanning segment. Topologically, residues 435 to 445 (LRGAKSSAAVP) are extracellular. A helical transmembrane segment spans residues 446–466 (FGTFASIIAMWFGISVPLVFL). Over 467 to 502 (GSYFASKKPVPEDPVRTNQIPRQVPDQIWYMNPYLS) the chain is Cytoplasmic. The helical transmembrane segment at 503–523 (ILMGGILPFGAVFIELHFILT) threads the bilayer. The Extracellular portion of the chain corresponds to 524 to 532 (SLWDNQFYY). A helical transmembrane segment spans residues 533-553 (IFGFLFIVLMILIVTSAEISI). Topologically, residues 554-578 (VMCYFQLCAEDHHWWWRSFLTAGSS) are cytoplasmic. The helical transmembrane segment at 579 to 599 (SLYMFIYSVSFFRYLGITKFI) threads the bilayer. The Extracellular portion of the chain corresponds to 600-608 (SSLLDFSYS). A helical transmembrane segment spans residues 609-629 (FIMSLAFAALTGTIGFYSCYF). Topologically, residues 630 to 641 (LVRKIYSSIHIN) are cytoplasmic.

Belongs to the nonaspanin (TM9SF) (TC 9.A.2) family.

The protein resides in the membrane. Its function is as follows. Involved in adhesion, phagocytosis of hydrophilic particles and intracellular killing of bacteria. Associates with proteins harboring glycine-rich transmembrane domains and ensures their efficient localization to the cell surface. The protein is Putative phagocytic receptor 1a (phg1a) of Dictyostelium discoideum (Social amoeba).